The chain runs to 457 residues: Forkhead box protein N3 (457 aa).

The interval 1–24 (MGPVMPASKKAESSGISVSSGLSQ) is disordered. Low complexity predominate over residues 13–23 (SSGISVSSGLS). 3 positions are modified to phosphoserine: Ser-83, Ser-85, and Ser-97. The interval 86–109 (PVQDLDDDTPPSPAHSDMPYDARQ) is disordered. Residues 114-210 (KPPYSFSCLI…QALKKTPYHP (97 aa)) constitute a DNA-binding region (fork-head). Residues 285–422 (RTESEPPCGS…PESDDEEMKE (138 aa)) form a disordered region. 2 stretches are compositionally biased toward low complexity: residues 308–331 (SSAKSSTARSTSPTSDSISSSSSS) and 342–353 (GSQEGSEGSFQS). The span at 354–376 (HESHSEPEEEDRKPSPKEGKDAL) shows a compositional bias: basic and acidic residues. The span at 384 to 396 (QHKKRQHFAKARK) shows a compositional bias: basic residues. Ser-415 carries the phosphoserine modification.

In terms of assembly, interacts through its C-terminus with the C-terminus of SNW1/SKIP.

It localises to the nucleus. Acts as a transcriptional repressor. May be involved in DNA damage-inducible cell cycle arrests (checkpoints). This is Forkhead box protein N3 (Foxn3) from Mus musculus (Mouse).